The following is a 239-amino-acid chain: Ribonuclease PH (239 aa).

Phosphate is bound by residues arginine 87 and 125-127 (GTR).

It belongs to the RNase PH family. Homohexameric ring arranged as a trimer of dimers.

The enzyme catalyses tRNA(n+1) + phosphate = tRNA(n) + a ribonucleoside 5'-diphosphate. Functionally, phosphorolytic 3'-5' exoribonuclease that plays an important role in tRNA 3'-end maturation. Removes nucleotide residues following the 3'-CCA terminus of tRNAs; can also add nucleotides to the ends of RNA molecules by using nucleoside diphosphates as substrates, but this may not be physiologically important. Probably plays a role in initiation of 16S rRNA degradation (leading to ribosome degradation) during starvation. This chain is Ribonuclease PH, found in Azotobacter vinelandii (strain DJ / ATCC BAA-1303).